We begin with the raw amino-acid sequence, 349 residues long: Small ribosomal subunit biogenesis GTPase RsgA 2 (349 aa).

One can recognise a CP-type G domain in the interval 97-252 (AEQLIATNVD…IIDTPGMREL (156 aa)). GTP contacts are provided by residues 142–145 (TKAD) and 194–202 (GSSGVGKST). Residues cysteine 275, cysteine 280, histidine 282, and cysteine 288 each contribute to the Zn(2+) site.

The protein belongs to the TRAFAC class YlqF/YawG GTPase family. RsgA subfamily. In terms of assembly, monomer. Associates with 30S ribosomal subunit, binds 16S rRNA. Zn(2+) is required as a cofactor.

The protein localises to the cytoplasm. Functionally, one of several proteins that assist in the late maturation steps of the functional core of the 30S ribosomal subunit. Helps release RbfA from mature subunits. May play a role in the assembly of ribosomal proteins into the subunit. Circularly permuted GTPase that catalyzes slow GTP hydrolysis, GTPase activity is stimulated by the 30S ribosomal subunit. The sequence is that of Small ribosomal subunit biogenesis GTPase RsgA 2 from Vibrio vulnificus (strain CMCP6).